Reading from the N-terminus, the 157-residue chain is DNA gyrase inhibitor (157 aa).

The protein belongs to the DNA gyrase inhibitor family. In terms of assembly, interacts with DNA gyrase.

It is found in the cytoplasm. In terms of biological role, inhibits the supercoiling activity of DNA gyrase. Acts by inhibiting DNA gyrase at an early step, prior to (or at the step of) binding of DNA by the gyrase. It protects cells against toxins that target DNA gyrase, by inhibiting activity of these toxins and reducing the formation of lethal double-strand breaks in the cell. The sequence is that of DNA gyrase inhibitor from Cronobacter turicensis (strain DSM 18703 / CCUG 55852 / LMG 23827 / z3032).